The chain runs to 224 residues: MHPEAKEPDCGFSEVLPRELGSLFSDTYTEESHYAFCGTELRITQHYGANLGVAAPVWDAALFLCGYFEEQKLDFKGKKVIELGAGTGIVGILVSLLGGHVTLTDLPHALSQIQKNVSANVSSNNPPQVCALSWGLDQEKFPQDYDFVLGADIVYLHDTYPLLIQTLQYLCGPQTSIFLSSKMRQEHGTMHFFQDILPQYFASELVKRNKDEEINIYKVTRYQN.

Residues W58, 84 to 86, D105, W134, and A151 contribute to the S-adenosyl-L-methionine site; that span reads GAG.

This sequence belongs to the methyltransferase superfamily. METTL21 family.

The protein resides in the cytoplasm. Its subcellular location is the cytoskeleton. It is found in the microtubule organizing center. It localises to the centrosome. The enzyme catalyses L-lysyl-[protein] + 3 S-adenosyl-L-methionine = N(6),N(6),N(6)-trimethyl-L-lysyl-[protein] + 3 S-adenosyl-L-homocysteine + 3 H(+). It carries out the reaction L-lysyl-[protein] + S-adenosyl-L-methionine = N(6)-methyl-L-lysyl-[protein] + S-adenosyl-L-homocysteine + H(+). The catalysed reaction is N(6)-methyl-L-lysyl-[protein] + S-adenosyl-L-methionine = N(6),N(6)-dimethyl-L-lysyl-[protein] + S-adenosyl-L-homocysteine + H(+). It catalyses the reaction N(6),N(6)-dimethyl-L-lysyl-[protein] + S-adenosyl-L-methionine = N(6),N(6),N(6)-trimethyl-L-lysyl-[protein] + S-adenosyl-L-homocysteine + H(+). Functionally, protein-lysine methyltransferase that selectively mono-, di- and trimethylates 'Lys-165' of the translation elongation factors EEF1A1 and EEF1A2 in an aminoacyl-tRNA and GTP-dependent manner. EEF1A1 methylation by EEF1AKMT3 is dynamic as well as inducible by stress conditions, such as ER-stress, and plays a regulatory role on mRNA translation. The polypeptide is EEF1A lysine methyltransferase 3 (Xenopus tropicalis (Western clawed frog)).